The sequence spans 1612 residues: uncharacterized protein (1612 aa).

The stretch at Glu23–Asn52 forms a coiled coil. Over residues Ile46–His93 the composition is skewed to basic and acidic residues. 2 disordered regions span residues Ile46–Val94 and Glu369–Gln400. A compositionally biased stretch (polar residues) spans Asp375–Leu394. Residues Phe479 to Asn499 form a helical membrane-spanning segment. Disordered regions lie at residues Thr698–Leu777, Asn992–Pro1037, Ser1091–Ser1157, and Asn1257–Lys1291. A compositionally biased stretch (basic and acidic residues) spans Lys708–Leu777. Composition is skewed to low complexity over residues Asn996–Asn1028, Ser1102–Asn1140, and Asn1257–Asn1271. Coiled coils occupy residues Tyr1338–Lys1362, Ser1444–Asp1469, and Asn1553–Thr1601. Residues Met1554–Glu1566 show a composition bias toward basic and acidic residues. Residues Met1554–Lys1612 are disordered. Residues Gly1567–Asp1597 show a composition bias toward acidic residues.

The protein localises to the membrane. This is an uncharacterized protein from Plasmodium falciparum (isolate 3D7).